The following is a 222-amino-acid chain: Cytochrome b6 (222 aa).

A helical membrane pass occupies residues 39–59 (IFYCLGGITLVCFLIQFATGF). Position 42 (C42) interacts with heme c. Heme b contacts are provided by H93 and H107. The next 3 membrane-spanning stretches (helical) occupy residues 97-117 (ASMMVLMMILHTFRVYLTGGF), 123-143 (LTWVTGVVMAVITVSFGVTGY), and 193-213 (LHTFVLPWFIAVFMLLHFLMI). Positions 194 and 209 each coordinate heme b.

This sequence belongs to the cytochrome b family. PetB subfamily. The 4 large subunits of the cytochrome b6-f complex are cytochrome b6, subunit IV (17 kDa polypeptide, PetD), cytochrome f and the Rieske protein, while the 4 small subunits are PetG, PetL, PetM and PetN. The complex functions as a dimer. The cofactor is heme b. Heme c serves as cofactor.

Its subcellular location is the cellular thylakoid membrane. Functionally, component of the cytochrome b6-f complex, which mediates electron transfer between photosystem II (PSII) and photosystem I (PSI), cyclic electron flow around PSI, and state transitions. In Trichodesmium erythraeum (strain IMS101), this protein is Cytochrome b6.